Reading from the N-terminus, the 953-residue chain is Translation initiation factor IF-2 (953 aa).

A disordered region spans residues 53-368 (AKKAVAGTSE…PVTERKFHEL (316 aa)). 2 stretches are compositionally biased toward basic and acidic residues: residues 135–151 (FKAE…ERRK) and 162–190 (RNDR…RNRQ). Over residues 191-214 (EQGNQHRNQGQSQYNQQRQSFNQG) the composition is skewed to low complexity. Over residues 236–266 (RSSEERFKQAKANKEALREQNKRKEQAKLED) the composition is skewed to basic and acidic residues. Low complexity predominate over residues 274–288 (PKPTAKAPATPAPTA). A compositionally biased stretch (basic and acidic residues) spans 301–318 (ARPDKERDNFDHEEDGPR). The segment covering 332 to 341 (NQKNSNWNNN) has biased composition (low complexity). The tr-type G domain occupies 455-622 (ERPPVVTIMG…TVLLVAEIQE (168 aa)). The interval 464 to 471 (GHVDHGKT) is G1. 464-471 (GHVDHGKT) is a binding site for GTP. Residues 489–493 (GITQH) form a G2 region. A G3 region spans residues 510-513 (DTPG). GTP is bound by residues 510–514 (DTPGH) and 564–567 (NKID). Residues 564–567 (NKID) are G4. A G5 region spans residues 600-602 (SAK).

It belongs to the TRAFAC class translation factor GTPase superfamily. Classic translation factor GTPase family. IF-2 subfamily.

It is found in the cytoplasm. In terms of biological role, one of the essential components for the initiation of protein synthesis. Protects formylmethionyl-tRNA from spontaneous hydrolysis and promotes its binding to the 30S ribosomal subunits. Also involved in the hydrolysis of GTP during the formation of the 70S ribosomal complex. This chain is Translation initiation factor IF-2, found in Streptococcus gordonii (strain Challis / ATCC 35105 / BCRC 15272 / CH1 / DL1 / V288).